The sequence spans 92 residues: Small ribosomal subunit protein uS19 (92 aa).

Belongs to the universal ribosomal protein uS19 family.

Functionally, protein S19 forms a complex with S13 that binds strongly to the 16S ribosomal RNA. This is Small ribosomal subunit protein uS19 from Bartonella bacilliformis (strain ATCC 35685 / KC583 / Herrer 020/F12,63).